The following is a 383-amino-acid chain: MILSPADQERIETFWNYCLKHQYFNIGYPESADFDYSALFRFFKFSINNCGDWKDYSNYALNSFDFEKDVMAYFAEIFQIPFEESWGYVTNGGTEGNMFGCYLARELFPDSTLYYSKDTHYSVGKIAKLLQMKSCVIESLDNGEIDYDDLIHKIKTNKESHPIIFANIGTTMTGAIDDIEMIQERLAQIGIMRRDYYIHADAALSGMILPFVDHPQAFSFAHGIDSICVSGHKMIGSPIPCGIVVAKRQNVERISVDVDYISTRDQTISGSRNGHTVLLMWAAIRSQTNLQRRHRIQHCLKMAQYAVDRFQAVGIPAWRNPNSITVVFPCPSEHIWKKHYLATSGNMAHLITTAHHRDTRQIDSLIDDVIFDLQGASKRTVGF.

Residue His-120 participates in substrate binding. Position 233 is an N6-(pyridoxal phosphate)lysine (Lys-233).

The protein belongs to the group II decarboxylase family. Homotetramer. Pyridoxal 5'-phosphate is required as a cofactor.

The catalysed reaction is L-histidine + H(+) = histamine + CO2. The polypeptide is Histidine decarboxylase (Acinetobacter baumannii (strain ATCC 17978 / DSM 105126 / CIP 53.77 / LMG 1025 / NCDC KC755 / 5377)).